We begin with the raw amino-acid sequence, 189 residues long: Protein GrpE (189 aa).

Positions 1-21 (MADEQNLDNQNPETPEQSQAD) are disordered. Residues 7–20 (LDNQNPETPEQSQA) show a composition bias toward polar residues.

This sequence belongs to the GrpE family. In terms of assembly, homodimer.

It localises to the cytoplasm. Functionally, participates actively in the response to hyperosmotic and heat shock by preventing the aggregation of stress-denatured proteins, in association with DnaK and GrpE. It is the nucleotide exchange factor for DnaK and may function as a thermosensor. Unfolded proteins bind initially to DnaJ; upon interaction with the DnaJ-bound protein, DnaK hydrolyzes its bound ATP, resulting in the formation of a stable complex. GrpE releases ADP from DnaK; ATP binding to DnaK triggers the release of the substrate protein, thus completing the reaction cycle. Several rounds of ATP-dependent interactions between DnaJ, DnaK and GrpE are required for fully efficient folding. This Stutzerimonas stutzeri (strain A1501) (Pseudomonas stutzeri) protein is Protein GrpE.